The following is a 254-amino-acid chain: Vitamin B12 import ATP-binding protein BtuD (254 aa).

Residues 3–239 (INYISVGNRL…ENLQQVFETP (237 aa)) enclose the ABC transporter domain. ATP is bound at residue 29 to 36 (GPNGSGKS).

Belongs to the ABC transporter superfamily. Vitamin B12 importer (TC 3.A.1.13.1) family. In terms of assembly, the complex is composed of two ATP-binding proteins (BtuD), two transmembrane proteins (BtuC) and a solute-binding protein (BtuF).

The protein resides in the cell inner membrane. It carries out the reaction an R-cob(III)alamin(out) + ATP + H2O = an R-cob(III)alamin(in) + ADP + phosphate + H(+). In terms of biological role, part of the ABC transporter complex BtuCDF involved in vitamin B12 import. Responsible for energy coupling to the transport system. The chain is Vitamin B12 import ATP-binding protein BtuD from Vibrio vulnificus (strain CMCP6).